The primary structure comprises 639 residues: E3 ubiquitin-protein ligase HEL2 (639 aa).

The segment at 1–55 (MSESVKENVTPTRNFRRTQGPQNNTKPHNDRKNFRRKQKKNNLSAEPNLTTSSAD) is disordered. Position 2 is an N-acetylserine (Ser2). 2 stretches are compositionally biased toward polar residues: residues 7-26 (ENVT…NNTK) and 43-54 (LSAEPNLTTSSA). At Thr57 the chain carries Phosphothreonine. The segment at 64 to 104 (CVICARKLTYVSLTPCHHKTCHICGFRQRALYNKKSCLICR) adopts an RING-type zinc-finger fold. In terms of domain architecture, LIM zinc-binding spans 222–292 (PMCAFCSGKR…QTCLDNKFVV (71 aa)). Residues 343–354 (SISSLPGSSSGS) show a composition bias toward low complexity. Disordered stretches follow at residues 343–367 (SISS…PEES) and 550–631 (LESK…GKQK). Ser354 is modified (phosphoserine).

The protein belongs to the ZNF598/HEL2 family. As to quaternary structure, interacts with the E2 ubiquitin-conjugating enzyme UBC4. Interacts with histones H3 and H4.

The protein localises to the cytoplasm. The catalysed reaction is S-ubiquitinyl-[E2 ubiquitin-conjugating enzyme]-L-cysteine + [acceptor protein]-L-lysine = [E2 ubiquitin-conjugating enzyme]-L-cysteine + N(6)-ubiquitinyl-[acceptor protein]-L-lysine.. It participates in protein modification; protein ubiquitination. Functionally, E3 ubiquitin-protein ligase that plays a key role in the ribosome quality control (RQC), a pathway that takes place when a ribosome has stalled during translation, leading to degradation of nascent peptide chains. HEL2 is activated when ribosomes are stalled within an mRNA following translation of prematurely polyadenylated mRNAs. Acts as a ribosome collision sensor: specifically recognizes and binds collided ribosome and ubiquitinates the 40S ribosomal proteins RPS20/uS10 and RPS3/uS3. Catalyzes 'Lys-63'-linked polyubiquitination of RPS20/uS10, promoting recruitment of the RQT (ribosome quality control trigger) complex, which drives the disassembly of stalled ribosomes, followed by degradation of nascent peptides. HEL2 also acts as an activator of the No-Go decay (NGD) pathway by mediating polyubiquitination of monoubiquitinated RPS3/uS3 and RPS7/es7: RPS3/uS3 and RPS7/es7 are first monoubiquitinated by MAG2 and MOT2/NOT4, respectively, and HEL2 mediates formation of 'Lys-63'-linked polyubiquitin chains on monoubiquitin, leading to activation of the NGD pathway in a CUE2-mediated endonucleolytic cleavage. Polyubiquitination of RPS3/uS3 also triggers degradation of non-functional 18S rRNA. The RQC pathway and the integrated stress response (ISR) antagonize each other: HEL2 prevents the activation of GCN2, while GCN2 suppresses RQC activation. The RQC pathway functions as a preventive quality control in the secretory pathway: HEL2 binds preferentially to the pre-engaged secretory ribosome-nascent chain complexes and prevents mistargeting of secretory proteins into mitochondria. Independently of its role in RQC, also involved in the polyubiquitination and proteasomal-degradation of excess histone proteins. In Saccharomyces cerevisiae (strain ATCC 204508 / S288c) (Baker's yeast), this protein is E3 ubiquitin-protein ligase HEL2.